Consider the following 562-residue polypeptide: MLKNQSNSVHVDGSHNNSSNYNDEVSSIAKSIRNADESVNFITFNQDASCIALGLKNGYKIFNCKPNFGKCYQFKKNESIGKIEMLYCTSLIAIVGLGEEVGSSPRKLKIINTRRQSTICELIFPSTILQVKLSKSRMIILLEEQIYIYDVTTMKLLHTIETSPNGNGLCTLSADNCDGKNNSYLAYPSPPKTITHDSLLVNGINTNGGMNSIQNNIQSVSNSPNRIGDVIIFNTTTLQPLSVIEAHKSALAAITLSTDGTLLATASDKGTIVRVFSVATGLKLYQFRRGTYPTKIFTLSFSFDNKYVLATSSSGTVHIFRLGEEESLENKHKRKRNSKKLKLNPEYETITEENENEIQKDDAEDDDIIQDDGDDSDADDDDDESLEVIPSKHRKLSQDSNNSFTSFNSAFSNDDNKDNKSEPLIDQTRLSVARLIRRSSQTLGRKAAQKMGDFLPTRFSSILEPTRNFASLKINSVSKDIKSIAIINNEVQEDLVPQAYLNAKENNPSPPKDISVNTAKDLLPLNLLHINVVTSEGYFYTYGLDPDRGGDCILLHQYFLLD.

The segment at M1–N22 is disordered. 2 WD repeats span residues A246–Q286 and T291–N330. Positions F287–T291 match the L/FRRG motif motif. The disordered stretch occupies residues S327–I425. The segment covering K331–K342 has biased composition (basic residues). The span at T349–L386 shows a compositional bias: acidic residues. A compositionally biased stretch (low complexity) spans D399–N413. The span at D414 to P423 shows a compositional bias: basic and acidic residues.

Belongs to the WD repeat PROPPIN family. Component of the PI(3,5)P2 regulatory complex.

The protein localises to the preautophagosomal structure membrane. The protein resides in the vacuole membrane. Its subcellular location is the endosome membrane. The PI(3,5)P2 regulatory complex regulates both the synthesis and turnover of phosphatidylinositol 3,5-bisphosphate (PtdIns(3,5)P2). Necessary for proper vacuole morphology. Plays an important role in osmotically-induced vacuole fragmentation. Required for cytoplasm to vacuole transport (Cvt) vesicle formation, pexophagy and starvation-induced autophagy. Involved in correct ATG9 trafficking to the pre-autophagosomal structure. Might also be involved in premeiotic DNA replication. This is Autophagy-related protein 18 (ATG18) from Debaryomyces hansenii (strain ATCC 36239 / CBS 767 / BCRC 21394 / JCM 1990 / NBRC 0083 / IGC 2968) (Yeast).